A 466-amino-acid polypeptide reads, in one-letter code: Methylenetetrahydrofolate--tRNA-(uracil-5-)-methyltransferase TrmFO (466 aa).

12–17 serves as a coordination point for FAD; the sequence is GAGLAG.

Belongs to the MnmG family. TrmFO subfamily. FAD serves as cofactor.

It localises to the cytoplasm. It carries out the reaction uridine(54) in tRNA + (6R)-5,10-methylene-5,6,7,8-tetrahydrofolate + NADH + H(+) = 5-methyluridine(54) in tRNA + (6S)-5,6,7,8-tetrahydrofolate + NAD(+). It catalyses the reaction uridine(54) in tRNA + (6R)-5,10-methylene-5,6,7,8-tetrahydrofolate + NADPH + H(+) = 5-methyluridine(54) in tRNA + (6S)-5,6,7,8-tetrahydrofolate + NADP(+). Functionally, catalyzes the folate-dependent formation of 5-methyl-uridine at position 54 (M-5-U54) in all tRNAs. This Synechococcus elongatus (strain ATCC 33912 / PCC 7942 / FACHB-805) (Anacystis nidulans R2) protein is Methylenetetrahydrofolate--tRNA-(uracil-5-)-methyltransferase TrmFO.